A 442-amino-acid polypeptide reads, in one-letter code: Cytokine receptor-like factor 3 (442 aa).

The residue at position 1 (M1) is an N-acetylmethionine. A coiled-coil region spans residues 10 to 57; that stretch reads ELLLQEARENVEAAQSYRRELGHRLEGLREARRQIKESASQTRDVLKQ. Residues 181–274 enclose the Fibronectin type-III domain; the sequence is PPVQIEELIE…PQIGHSTLVP (94 aa).

Belongs to the cytokine receptor-like factor 3 family. In terms of tissue distribution, expressed in several embryonic and adult tissues, including adult and fetal brain, liver, spleen and pancreas. Expressed in adult, but not fetal kidney. Expressed in skin and squamous cell carcinoma (SCC) and in several other cancer types. Also detected in lesion actinic keratosis (AK).

It is found in the cytoplasm. May play a role in the negative regulation of cell cycle progression. The polypeptide is Cytokine receptor-like factor 3 (CRLF3) (Homo sapiens (Human)).